A 405-amino-acid chain; its full sequence is Scarecrow-like protein 23 (405 aa).

Residues 1 to 20 are disordered; the sequence is MTTKRIDRDLPSSDDPSSAK. A GRAS domain is found at 31 to 400; the sequence is ENDGAAAIKL…LSLLTASAWK (370 aa). The interval 38–102 is leucine repeat I (LRI); it reads IKLLSLLLQC…ISSYLSGACS (65 aa). Residues 45–49 carry the LxCxE motif motif; it reads LQCAE. Positions 121-186 are VHIID; that stretch reads LQTYNSVSPL…RKLRSIRITG (66 aa). The VHIID signature appears at 152–156; it reads VHIID. Positions 196-228 are leucine repeat II (LRII); the sequence is STGRRLADFASSLNLPFEFHPIEGIIGNLIDPS. The tract at residues 238-327 is PFYRE; it reads VVVHWMQHRL…QIVLGTEIRN (90 aa). Positions 330–400 are SAW; sequence AHGGGRRKRM…LSLLTASAWK (71 aa).

The protein belongs to the GRAS family. As to quaternary structure, interacts with SHR. Expressed in seedlings, cotyledons, shoot apex, leaves and flowers.

Its subcellular location is the nucleus. Probable transcription factor involved in plant development. The protein is Scarecrow-like protein 23 (SCL23) of Arabidopsis thaliana (Mouse-ear cress).